We begin with the raw amino-acid sequence, 112 residues long: cAMP-regulated phosphoprotein 19 (112 aa).

At Met1 the chain carries N-acetylmethionine. A compositionally biased stretch (low complexity) spans 1–11 (MSAEVPEAASA). Residues 1–49 (MSAEVPEAASAEEQKEMEDKVTSPEKAEEAKLKARYPHLGQKPGGSDFL) form a disordered region. Ser2 is subject to N-acetylserine. Phosphoserine occurs at positions 2 and 23. Residues 12 to 32 (EEQKEMEDKVTSPEKAEEAKL) are compositionally biased toward basic and acidic residues. Residues Ser62 and Ser104 each carry the phosphoserine; by GWL modification. The segment at 74–112 (NKQLPAAAPDKTEVTGDHIPTPQDLPQRKPSLVASKLAG) is disordered. Ser104 is modified (phosphoserine; by PKA). Lys109 is subject to N6-acetyllysine.

Belongs to the endosulfine family. As to quaternary structure, interacts (when phosphorylated at Ser-62) with PPP2R2D. Interacts with SNCA. Interacts with PPP2R2A; the interaction is direct and this interaction inhibits PP2A activity. In terms of processing, phosphorylation at Ser-62 by MASTL/GWL during mitosis is essential for interaction with PPP2R2D (PR55-delta) and subsequent inactivation of PP2A. Phosphorylated by PKA.

It is found in the cytoplasm. Protein phosphatase inhibitor that specifically inhibits protein phosphatase 2A (PP2A) during mitosis. Inhibition of PP2A is enhanced when ARPP19 is phosphorylated. When phosphorylated at Ser-62 during mitosis, specifically interacts with PPP2R2D (PR55-delta) and inhibits its activity, leading to inactivation of PP2A, an essential condition to keep cyclin-B1-CDK1 activity high during M phase. May indirectly enhance GAP-43 expression by binding to the NGF-regulatory region of its mRNA. The polypeptide is cAMP-regulated phosphoprotein 19 (Arpp19) (Mus musculus (Mouse)).